The primary structure comprises 629 residues: Nicotinic receptor-associated protein 1 (629 aa).

2 consecutive C2 domains span residues 1–144 and 162–299; these read MNQP…KAHL and RTGS…ELLL. Residues aspartate 33, aspartate 39, aspartate 108, aspartate 110, aspartate 122, aspartate 192, aspartate 198, aspartate 254, aspartate 256, and aspartate 274 each coordinate Ca(2+). The region spanning 342 to 561 is the VWFA domain; the sequence is EFAVAVDFTA…LDPDVVQENL (220 aa). Disordered regions lie at residues 581-600 and 607-629; these read GFQP…PPDY and IGRR…PPMY.

Belongs to the copine family. Interacts with nicotinic acetylcholine receptor. Ca(2+) serves as cofactor.

The protein localises to the cell membrane. Exhibits calcium-dependent phospholipid binding properties. May function in membrane trafficking. Regulates synaptic levels of nicotinic acetylcholine receptor subunit lev-1 and unc-38 in the nerve cord. Involved in nicotinic acetylcholine receptor (nAChR)-mediated sensitivity to nicotine and levamisole. Affects directional sperm motility. The polypeptide is Nicotinic receptor-associated protein 1 (Caenorhabditis briggsae).